Reading from the N-terminus, the 743-residue chain is Phosphoribosylformylglycinamidine synthase subunit PurL (743 aa).

H50 is an active-site residue. ATP is bound by residues Y53 and K92. E94 provides a ligand contact to Mg(2+). Residues 95–98 (SHNH) and R117 each bind substrate. Residue H96 is the Proton acceptor of the active site. D118 contributes to the Mg(2+) binding site. Q241 is a substrate binding site. Position 269 (D269) interacts with Mg(2+). Residue 313–315 (ESQ) participates in substrate binding. Positions 495 and 532 each coordinate ATP. Residue N533 coordinates Mg(2+). Position 535 (S535) interacts with substrate.

The protein belongs to the FGAMS family. Monomer. Part of the FGAM synthase complex composed of 1 PurL, 1 PurQ and 2 PurS subunits.

It localises to the cytoplasm. The enzyme catalyses N(2)-formyl-N(1)-(5-phospho-beta-D-ribosyl)glycinamide + L-glutamine + ATP + H2O = 2-formamido-N(1)-(5-O-phospho-beta-D-ribosyl)acetamidine + L-glutamate + ADP + phosphate + H(+). It participates in purine metabolism; IMP biosynthesis via de novo pathway; 5-amino-1-(5-phospho-D-ribosyl)imidazole from N(2)-formyl-N(1)-(5-phospho-D-ribosyl)glycinamide: step 1/2. Functionally, part of the phosphoribosylformylglycinamidine synthase complex involved in the purines biosynthetic pathway. Catalyzes the ATP-dependent conversion of formylglycinamide ribonucleotide (FGAR) and glutamine to yield formylglycinamidine ribonucleotide (FGAM) and glutamate. The FGAM synthase complex is composed of three subunits. PurQ produces an ammonia molecule by converting glutamine to glutamate. PurL transfers the ammonia molecule to FGAR to form FGAM in an ATP-dependent manner. PurS interacts with PurQ and PurL and is thought to assist in the transfer of the ammonia molecule from PurQ to PurL. The protein is Phosphoribosylformylglycinamidine synthase subunit PurL of Rhizobium leguminosarum bv. trifolii (strain WSM2304).